A 299-amino-acid polypeptide reads, in one-letter code: 4-diphosphocytidyl-2-C-methyl-D-erythritol kinase (299 aa).

Residue lysine 17 is part of the active site. Residue 103-113 (PVASGIGGGSG) coordinates ATP. Residue aspartate 145 is part of the active site.

Belongs to the GHMP kinase family. IspE subfamily.

It catalyses the reaction 4-CDP-2-C-methyl-D-erythritol + ATP = 4-CDP-2-C-methyl-D-erythritol 2-phosphate + ADP + H(+). It participates in isoprenoid biosynthesis; isopentenyl diphosphate biosynthesis via DXP pathway; isopentenyl diphosphate from 1-deoxy-D-xylulose 5-phosphate: step 3/6. Functionally, catalyzes the phosphorylation of the position 2 hydroxy group of 4-diphosphocytidyl-2C-methyl-D-erythritol. The polypeptide is 4-diphosphocytidyl-2-C-methyl-D-erythritol kinase (Bartonella tribocorum (strain CIP 105476 / IBS 506)).